A 412-amino-acid polypeptide reads, in one-letter code: tRNA N6-adenosine threonylcarbamoyltransferase, mitochondrial (412 aa).

The transit peptide at 1–78 directs the protein to the mitochondrion; sequence MLCLVYNSIL…IICLNTHRTI (78 aa). His-157 and His-161 together coordinate a divalent metal cation. Substrate-binding positions include 179–183, Asp-212, Ala-228, Glu-232, 328–329, and Ser-363; these read LVSGG and RN. Asp-364 serves as a coordination point for a divalent metal cation.

It belongs to the KAE1 / TsaD family. In terms of assembly, homodimer. Requires a divalent metal cation as cofactor.

The protein localises to the mitochondrion. The catalysed reaction is L-threonylcarbamoyladenylate + adenosine(37) in tRNA = N(6)-L-threonylcarbamoyladenosine(37) in tRNA + AMP + H(+). In terms of biological role, required for the formation of a threonylcarbamoyl group on adenosine at position 37 (t(6)A37) in mitochondrial tRNAs that read codons beginning with adenine. Probably involved in the transfer of the threonylcarbamoyl moiety of threonylcarbamoyl-AMP (TC-AMP) to the N6 group of A37. Involved in mitochondrial genome maintenance. The polypeptide is tRNA N6-adenosine threonylcarbamoyltransferase, mitochondrial (pgp1) (Schizosaccharomyces pombe (strain 972 / ATCC 24843) (Fission yeast)).